Reading from the N-terminus, the 189-residue chain is UPF0312 protein VC0395_0473/VC395_A0785 (189 aa).

The N-terminal stretch at 1–22 (MKKTLMAVGLAAVISIPFAANA) is a signal peptide.

The protein belongs to the UPF0312 family. Type 1 subfamily.

The protein resides in the periplasm. This is UPF0312 protein VC0395_0473/VC395_A0785 from Vibrio cholerae serotype O1 (strain ATCC 39541 / Classical Ogawa 395 / O395).